Reading from the N-terminus, the 697-residue chain is DNA ligase (697 aa).

Residues aspartate 44–aspartate 48, serine 93–leucine 94, and glutamate 123 each bind NAD(+). Lysine 125 (N6-AMP-lysine intermediate) is an active-site residue. Arginine 146, glutamate 186, lysine 302, and lysine 326 together coordinate NAD(+). Residues cysteine 420, cysteine 423, cysteine 439, and cysteine 445 each coordinate Zn(2+). The region spanning serine 609–valine 697 is the BRCT domain.

Belongs to the NAD-dependent DNA ligase family. LigA subfamily. Mg(2+) is required as a cofactor. Mn(2+) serves as cofactor.

It carries out the reaction NAD(+) + (deoxyribonucleotide)n-3'-hydroxyl + 5'-phospho-(deoxyribonucleotide)m = (deoxyribonucleotide)n+m + AMP + beta-nicotinamide D-nucleotide.. Functionally, DNA ligase that catalyzes the formation of phosphodiester linkages between 5'-phosphoryl and 3'-hydroxyl groups in double-stranded DNA using NAD as a coenzyme and as the energy source for the reaction. It is essential for DNA replication and repair of damaged DNA. In Rhodococcus opacus (strain B4), this protein is DNA ligase.